A 103-amino-acid polypeptide reads, in one-letter code: MATLKTTIFIIFILYISCTMFVNIFRVQADASCLTTKECVVRCSDEDAQCIHGECHCPHLKVDIEPTKAIRCKTDLDCPDPHQCPKYDYYACLNNGECTCISV.

Positions 1–29 (MATLKTTIFIIFILYISCTMFVNIFRVQA) are cleaved as a signal peptide. 6 cysteine pairs are disulfide-bonded: cysteine 33–cysteine 50, cysteine 39–cysteine 55, cysteine 43–cysteine 57, cysteine 72–cysteine 92, cysteine 78–cysteine 98, and cysteine 84–cysteine 100.

It belongs to the DEFL family.

Its subcellular location is the secreted. The chain is Defensin-like protein 289 from Arabidopsis thaliana (Mouse-ear cress).